The primary structure comprises 328 residues: UPF0421 protein SERP1427 (328 aa).

A run of 4 helical transmembrane segments spans residues 26–46 (LFCMLLNLTPIFAILTAIVTI), 61–81 (LPATVIGALFAVVFTYVFGDQ), 109–129 (AVLTSVAMIPGIHEAYVFNFF), and 132–152 (LLTALIGLVTAGLVNFIILPP).

This sequence belongs to the UPF0421 family.

The protein resides in the cell membrane. This is UPF0421 protein SERP1427 from Staphylococcus epidermidis (strain ATCC 35984 / DSM 28319 / BCRC 17069 / CCUG 31568 / BM 3577 / RP62A).